Reading from the N-terminus, the 460-residue chain is MFKSLYTRIAIYTITVMIFSAVASFLCTNIIYHNYLKENNDAKIMRTLKDSIQYQKESRIEASAPFFKHLGEMNYQVMTISEDGHRTYYGTEFRKDNISKKTAESVLHGKDYHGIKNLPYNPIITGFFENTTKNTVGIAYQSKGHTYAVFMRPDIGKTFSEFRIFLAILITLLLLFSIILVISSTYAIIKPIQQLKRATERLMHGNFDEVIHVTRKDEFGTLQYRFDKMRLSLKQLDDMRQHFVQNVSHEIKTPLTHIHHLLDLLKFAKTDNAREQYIEEIYEVTTQLSELTKALLLLSEIDNGAHLDFDDDIQLNQLIKKIIRHEQFSANEKDLIIMSDLETISMNGNERLLHQAFQNLITNAIKYSTTGGMVDVTLSQNLETITCTITDDGQGMSAETQARIFERFYKSSNHDNSNGLGLAIAKAIFELHHGTITVDSEKNAGTTFTITFKKVPKTIS.

2 helical membrane passes run 11–31 (IYTI…TNII) and 164–184 (IFLA…VISS). Positions 186–238 (YAIIKPIQQLKRATERLMHGNFDEVIHVTRKDEFGTLQYRFDKMRLSLKQLDD) constitute an HAMP domain. The Histidine kinase domain occupies 246–456 (NVSHEIKTPL…TFTITFKKVP (211 aa)). Position 249 is a phosphohistidine; by autocatalysis (H249).

Post-translationally, autophosphorylated.

It is found in the cell membrane. The enzyme catalyses ATP + protein L-histidine = ADP + protein N-phospho-L-histidine.. Member of the two-component regulatory system HssS/HssR involved in intracellular heme homeostasis and tempering of staphylococcal virulence. HssS functions as a heme sensor histidine kinase which is autophosphorylated at a histidine residue and transfers its phosphate group to an aspartate residue of HssR. HssR/HssS activates the expression of hrtAB, an efflux pump, in response to extracellular heme, hemin, hemoglobin or blood. The sequence is that of Heme sensor protein HssS (hssS) from Staphylococcus saprophyticus subsp. saprophyticus (strain ATCC 15305 / DSM 20229 / NCIMB 8711 / NCTC 7292 / S-41).